A 928-amino-acid polypeptide reads, in one-letter code: Protein ARABIDILLO 2 (928 aa).

The Nuclear localization signal motif lies at 3-8; sequence RRVRQR. The 47-residue stretch at 37 to 83 folds into the F-box domain; it reads YVNWTSLPYDTVFHLFTRLNYRDRASLASTCRTWRSLGASSFLWSSL. ARM repeat units follow at residues 147–186, 237–278, 303–341, 370–409, 419–458, 460–499, 501–543, 545–585, 591–630, 632–674, 676–715, 717–757, and 824–864; these read AARHEALESLQLGPDFCERITSDAIRVIAFCCPKLKKLRV, TSNI…KSSQ, KGKVLLAVFTDTFDELASIFADNSKKPKNIFSYWRDLIR, SQGLNDFWLNQGATLLLSLMQSAQEDVQERAATGLATFIV, CGRAEAVMRDGGIRLLLELAKSWREGLQSEAAKAIANLSV, AKVAKAVAEEGGISVLADLAKSMNRLVAEEAAGGLWNLSV, EEHK…NLAA, DKCS…NLAA, GNNAAVGQEAGALEALVQLTQSPHEGVKQEAAGALWNLAF, DKNR…GLSV, EANSIAIGHEGGIPPLIALVRSEAEDVHETAAGALWNLSF, PGNA…YMFD, and IPEA…QFTI.

It belongs to the beta-catenin family. As to expression, expressed ubiquitously.

It is found in the nucleus. Functionally, promotes lateral root initiation and development, independently of auxin (IAA) and abscisis acid (ABA). The protein is Protein ARABIDILLO 2 of Arabidopsis thaliana (Mouse-ear cress).